The primary structure comprises 157 residues: Class 10 plant pathogenesis-related protein 2E (157 aa).

Asp-8 contributes to the trans-zeatin binding site. The Ca(2+) site is built by Pro-32, Val-35, and Ile-38. Positions 60, 69, 81, and 83 each coordinate trans-zeatin.

This sequence belongs to the BetVI family.

It localises to the cytoplasm. The protein localises to the cytosol. Functionally, class II ribonuclease (RNase). Binds to cytokinins. Interacts with melatonin. In Lupinus luteus (European yellow lupine), this protein is Class 10 plant pathogenesis-related protein 2E.